The sequence spans 466 residues: Argininosuccinate lyase (466 aa).

This sequence belongs to the lyase 1 family. Argininosuccinate lyase subfamily.

It is found in the cytoplasm. The catalysed reaction is 2-(N(omega)-L-arginino)succinate = fumarate + L-arginine. It participates in amino-acid biosynthesis; L-arginine biosynthesis; L-arginine from L-ornithine and carbamoyl phosphate: step 3/3. This is Argininosuccinate lyase from Brucella abortus (strain S19).